We begin with the raw amino-acid sequence, 210 residues long: Outer-membrane lipoprotein LolB (210 aa).

The first 26 residues, 1 to 26, serve as a signal peptide directing secretion; it reads MSKLKIDTKRRFSLLIALVLIISLSS. A lipid anchor (N-palmitoyl cysteine) is attached at C27. The S-diacylglycerol cysteine moiety is linked to residue C27.

This sequence belongs to the LolB family. In terms of assembly, monomer.

Its subcellular location is the cell outer membrane. Plays a critical role in the incorporation of lipoproteins in the outer membrane after they are released by the LolA protein. The polypeptide is Outer-membrane lipoprotein LolB (Francisella tularensis subsp. holarctica (strain FTNF002-00 / FTA)).